The following is a 188-amino-acid chain: GMP synthase [glutamine-hydrolyzing] subunit A (188 aa).

The 187-residue stretch at 2-188 folds into the Glutamine amidotransferase type-1 domain; sequence KIYIIDNGGQ…FKNFIEKCRR (187 aa). Residue C79 is the Nucleophile of the active site. Residues H166 and E168 contribute to the active site.

In terms of assembly, heterodimer composed of a glutamine amidotransferase subunit (A) and a GMP-binding subunit (B).

The catalysed reaction is XMP + L-glutamine + ATP + H2O = GMP + L-glutamate + AMP + diphosphate + 2 H(+). The protein operates within purine metabolism; GMP biosynthesis; GMP from XMP (L-Gln route): step 1/1. Functionally, catalyzes the synthesis of GMP from XMP. The sequence is that of GMP synthase [glutamine-hydrolyzing] subunit A from Picrophilus torridus (strain ATCC 700027 / DSM 9790 / JCM 10055 / NBRC 100828 / KAW 2/3).